The sequence spans 394 residues: Acryloyl-CoA reductase (NADH) (394 aa).

FAD is bound by residues 135 to 144 (FALTEPNAGS) and 170 to 172 (FIS). A substrate-binding site is contributed by Ser144. 254–257 (DGAR) contacts substrate. FAD-binding positions include Arg282, Gln293, and 350-354 (QIHGG). Catalysis depends on Glu377, which acts as the Proton acceptor. Residue Gly378 participates in substrate binding. FAD is bound at residue 379–381 (TSE).

As to quaternary structure, heterohexadecamer; tetramer of tetramers. Each tetramer is composed of 2 alpha (AcrC), a beta (AcrA) and a gamma (AcrB) subunit. It depends on FAD as a cofactor.

The protein localises to the cytoplasm. The enzyme catalyses propanoyl-CoA + NAD(+) = acryloyl-CoA + NADH + H(+). Functionally, probable catalytic subunit of the acryloyl-CoA reductase complex involved in the pathway of L-alanine fermentation. Catalyzes the irreversible NADH-dependent formation of propionyl-CoA from acryloyl-CoA. It can also use 3-buten-2-one as substrate. The protein is Acryloyl-CoA reductase (NADH) (acrC) of Anaerotignum propionicum (Clostridium propionicum).